The chain runs to 369 residues: 3-isopropylmalate dehydrogenase (369 aa).

Residue 77–90 (GPKWDDLPFDKKPE) coordinates NAD(+). Residues arginine 97, arginine 107, arginine 135, and aspartate 226 each coordinate substrate. 3 residues coordinate Mg(2+): aspartate 226, aspartate 250, and aspartate 254. Position 289–301 (289–301 (GSAPDIAGKDMAN)) interacts with NAD(+).

Belongs to the isocitrate and isopropylmalate dehydrogenases family. LeuB type 1 subfamily. Homodimer. Requires Mg(2+) as cofactor. The cofactor is Mn(2+).

Its subcellular location is the cytoplasm. It carries out the reaction (2R,3S)-3-isopropylmalate + NAD(+) = 4-methyl-2-oxopentanoate + CO2 + NADH. It participates in amino-acid biosynthesis; L-leucine biosynthesis; L-leucine from 3-methyl-2-oxobutanoate: step 3/4. In terms of biological role, catalyzes the oxidation of 3-carboxy-2-hydroxy-4-methylpentanoate (3-isopropylmalate) to 3-carboxy-4-methyl-2-oxopentanoate. The product decarboxylates to 4-methyl-2 oxopentanoate. In Paramagnetospirillum magneticum (strain ATCC 700264 / AMB-1) (Magnetospirillum magneticum), this protein is 3-isopropylmalate dehydrogenase.